A 208-amino-acid chain; its full sequence is Ribosomal RNA large subunit methyltransferase E (208 aa).

S-adenosyl-L-methionine-binding residues include G63, W65, D83, D99, and D124. The active-site Proton acceptor is the K164.

The protein belongs to the class I-like SAM-binding methyltransferase superfamily. RNA methyltransferase RlmE family.

It is found in the cytoplasm. It catalyses the reaction uridine(2552) in 23S rRNA + S-adenosyl-L-methionine = 2'-O-methyluridine(2552) in 23S rRNA + S-adenosyl-L-homocysteine + H(+). Functionally, specifically methylates the uridine in position 2552 of 23S rRNA at the 2'-O position of the ribose in the fully assembled 50S ribosomal subunit. The polypeptide is Ribosomal RNA large subunit methyltransferase E (Salmonella agona (strain SL483)).